Reading from the N-terminus, the 297-residue chain is Putative S-adenosyl-L-methionine-dependent methyltransferase MSMEG_0614/MSMEI_0598 (297 aa).

S-adenosyl-L-methionine-binding positions include Asp125 and Asp154–Leu155.

Belongs to the UPF0677 family.

In terms of biological role, exhibits S-adenosyl-L-methionine-dependent methyltransferase activity. This chain is Putative S-adenosyl-L-methionine-dependent methyltransferase MSMEG_0614/MSMEI_0598, found in Mycolicibacterium smegmatis (strain ATCC 700084 / mc(2)155) (Mycobacterium smegmatis).